The following is a 225-amino-acid chain: Membrane protein (225 aa).

Over 1–20 the chain is Virion surface; it reads MSNETNCTLDFEQSVQLFKE. Residues Asn-3 and Asn-6 are each glycosylated (N-linked (GlcNAc...) asparagine; by host). The helical transmembrane segment at 21–41 threads the bilayer; that stretch reads YNLFITAFLLFLTIILQYGYA. Residues 42–51 are Intravirion-facing; it reads TRSKVIYTLK. A helical membrane pass occupies residues 52–72; that stretch reads MIVLWCFWPLNIAVGVISCIY. Residues 73–77 are Virion surface-facing; the sequence is PPNTG. Residues 78-98 traverse the membrane as a helical segment; the sequence is GLVAAIILTVFACLSFVGYWI. Residues 99–225 are Intravirion-facing; it reads QSIRLFKRCR…VATGGSSLYT (127 aa).

The protein belongs to the gammacoronaviruses M protein family. Homomultimer. Interacts with envelope E protein in the budding compartment of the host cell, which is located between endoplasmic reticulum and the Golgi complex. Forms a complex with HE and S proteins. Interacts with nucleocapsid N protein. This interaction probably participates in RNA packaging into the virus.

The protein localises to the virion membrane. It is found in the host Golgi apparatus membrane. In terms of biological role, component of the viral envelope that plays a central role in virus morphogenesis and assembly via its interactions with other viral proteins. The polypeptide is Membrane protein (Gallus gallus (Chicken)).